Reading from the N-terminus, the 704-residue chain is ATP-dependent zinc metalloprotease FtsH (704 aa).

Topologically, residues 1–17 are cytoplasmic; sequence MADSAKTPRGKKRRPFT. The helical transmembrane segment at 18 to 38 threads the bilayer; it reads GLALWIIVALLLGMAMFSLFG. Residues 39 to 127 lie on the Extracellular side of the membrane; that stretch reads RDGYQQIDTQ…DEIASSSWWS (89 aa). The helical transmembrane segment at 128–148 threads the bilayer; it reads TLLLSFLPLLIFIGLFWFLIM. At 149 to 704 the chain is on the cytoplasmic side; that stretch reads NAQGGGKAMQ…GSAGTDGTGR (556 aa). 217-224 provides a ligand contact to ATP; that stretch reads GPPGTGKT. Residue H439 participates in Zn(2+) binding. E440 is a catalytic residue. Positions 443 and 515 each coordinate Zn(2+). The disordered stretch occupies residues 624-704; the sequence is PREVWISSTE…GSAGTDGTGR (81 aa). Gly residues predominate over residues 681-704; the sequence is PHGGEPGGGGYGYDGSAGTDGTGR.

In the central section; belongs to the AAA ATPase family. The protein in the C-terminal section; belongs to the peptidase M41 family. Homohexamer. The cofactor is Zn(2+).

It localises to the cell membrane. Functionally, acts as a processive, ATP-dependent zinc metallopeptidase for both cytoplasmic and membrane proteins. Plays a role in the quality control of integral membrane proteins. This Brachybacterium faecium (strain ATCC 43885 / DSM 4810 / JCM 11609 / LMG 19847 / NBRC 14762 / NCIMB 9860 / 6-10) protein is ATP-dependent zinc metalloprotease FtsH.